The sequence spans 416 residues: MNKQSWLLNLSLLKTHPAFRAVFLARFISIVSLGLLGVAVPVQIQMMTHSTWQVGLSVTLTGGAMFVGLMVGGVLADRYERKKVILLARGTCGIGFIGLCLNALLPEPSLLAIYLLGLWDGFFASLGVTALLAATPALVGRENLMQAGAITMLTVRLGSVISPMIGGLLLATGGVAWNYGLAAAGTFITLLPLLSLPALPPPPQPREHPLKSLLAGFRFLLASPLVGGIALLGGLLTMASAVRVLYPALADNWQMSAAQIGFLYAAIPLGAAIGALTSGKLAHSVRPGLLMLLSTLGAFLAISLFGLMPMWILGVVCLALFGWLSAVSSLLQYTMLQTQTPEAMLGRINGLWTAQNVTGDAIGAALLGGLGAMMTPVASASASGFGLLIIGVLLLLVLVELRRFRQTPPQVTASDS.

Over 1–21 the chain is Cytoplasmic; the sequence is MNKQSWLLNLSLLKTHPAFRA. Residues 22 to 42 traverse the membrane as a helical segment; the sequence is VFLARFISIVSLGLLGVAVPV. Topologically, residues 43-55 are periplasmic; it reads QIQMMTHSTWQVG. A helical membrane pass occupies residues 56 to 76; sequence LSVTLTGGAMFVGLMVGGVLA. Residues 77-83 lie on the Cytoplasmic side of the membrane; sequence DRYERKK. The helical transmembrane segment at 84-104 threads the bilayer; sequence VILLARGTCGIGFIGLCLNAL. Residues 105 to 109 are Periplasmic-facing; sequence LPEPS. The helical transmembrane segment at 110–130 threads the bilayer; sequence LLAIYLLGLWDGFFASLGVTA. Residues 131–156 are Cytoplasmic-facing; that stretch reads LLAATPALVGRENLMQAGAITMLTVR. Residues 157 to 177 form a helical membrane-spanning segment; it reads LGSVISPMIGGLLLATGGVAW. A topological domain (periplasmic) is located at residue N178. Residues 179 to 199 form a helical membrane-spanning segment; it reads YGLAAAGTFITLLPLLSLPAL. Residues 200 to 218 lie on the Cytoplasmic side of the membrane; sequence PPPPQPREHPLKSLLAGFR. Residues 219-239 form a helical membrane-spanning segment; the sequence is FLLASPLVGGIALLGGLLTMA. At 240–256 the chain is on the periplasmic side; sequence SAVRVLYPALADNWQMS. A helical transmembrane segment spans residues 257–277; the sequence is AAQIGFLYAAIPLGAAIGALT. The Cytoplasmic segment spans residues 278–287; the sequence is SGKLAHSVRP. A helical membrane pass occupies residues 288-307; the sequence is GLLMLLSTLGAFLAISLFGL. Topologically, residues 308–313 are periplasmic; the sequence is MPMWIL. A helical transmembrane segment spans residues 314–336; it reads GVVCLALFGWLSAVSSLLQYTML. Residues 337-356 lie on the Cytoplasmic side of the membrane; that stretch reads QTQTPEAMLGRINGLWTAQN. Residues 357–377 form a helical membrane-spanning segment; sequence VTGDAIGAALLGGLGAMMTPV. Residue A378 is a topological domain, periplasmic. The chain crosses the membrane as a helical span at residues 379-399; it reads SASASGFGLLIIGVLLLLVLV. The Cytoplasmic segment spans residues 400–416; the sequence is ELRRFRQTPPQVTASDS.

It belongs to the major facilitator superfamily. EntS (TC 2.A.1.38) family.

It is found in the cell inner membrane. Functionally, component of an export pathway for enterobactin. The sequence is that of Enterobactin exporter EntS from Escherichia coli O45:K1 (strain S88 / ExPEC).